A 726-amino-acid chain; its full sequence is Quinolinate synthase, chloroplastic (726 aa).

The N-terminal 67 residues, 1-67, are a transit peptide targeting the chloroplast; the sequence is MDAANLVMKS…KKPSNNSTFT (67 aa). Cys-133 (cysteine persulfide intermediate) is an active-site residue. Iminosuccinate contacts are provided by His-283 and Ser-309. Cys-363 contacts [4Fe-4S] cluster. Iminosuccinate is bound by residues 392-394 and Ser-414; that span reads YIN. Cys-487 contributes to the [4Fe-4S] cluster binding site. Iminosuccinate is bound by residues 513-515 and Thr-538; that span reads HFE. Cys-643 is a binding site for [4Fe-4S] cluster.

Belongs to the quinolinate synthase family. Type 1 subfamily. Homodimer. [4Fe-4S] cluster is required as a cofactor.

Its subcellular location is the plastid. The protein resides in the chloroplast. The catalysed reaction is iminosuccinate + dihydroxyacetone phosphate = quinolinate + phosphate + 2 H2O + H(+). It participates in alkaloid biosynthesis; nicotine biosynthesis. Its pathway is cofactor biosynthesis; NAD(+) biosynthesis; quinolinate from iminoaspartate: step 1/1. Functionally, involved in the biosynthesis of pyridine alkaloid natural products, leading mainly to the production of anabasine, anatabine, nicotine and nornicotine, effective deterrents against herbivores with antiparasitic and pesticide properties (neurotoxins); nornicotine serves as the precursor in the synthesis of the carcinogen compound N'-nitrosonornicotine (NNN). Catalyzes the condensation of iminoaspartate with dihydroxyacetone phosphate to form quinolinate. The chain is Quinolinate synthase, chloroplastic from Nicotiana tabacum (Common tobacco).